Reading from the N-terminus, the 275-residue chain is Release factor glutamine methyltransferase (275 aa).

S-adenosyl-L-methionine-binding positions include 117 to 121 (GTGSG), Asp-140, Trp-168, and Asn-182. A substrate-binding site is contributed by 182-185 (NPPY).

It belongs to the protein N5-glutamine methyltransferase family. PrmC subfamily.

It catalyses the reaction L-glutaminyl-[peptide chain release factor] + S-adenosyl-L-methionine = N(5)-methyl-L-glutaminyl-[peptide chain release factor] + S-adenosyl-L-homocysteine + H(+). Functionally, methylates the class 1 translation termination release factors RF1/PrfA and RF2/PrfB on the glutamine residue of the universally conserved GGQ motif. The chain is Release factor glutamine methyltransferase from Buchnera aphidicola subsp. Schizaphis graminum (strain Sg).